A 367-amino-acid polypeptide reads, in one-letter code: tRNA/tmRNA (uracil-C(5))-methyltransferase (367 aa).

The S-adenosyl-L-methionine site is built by Gln-190, Tyr-218, Asn-223, Glu-239, and Asp-299. Cys-324 acts as the Nucleophile in catalysis. Catalysis depends on Glu-358, which acts as the Proton acceptor.

It belongs to the class I-like SAM-binding methyltransferase superfamily. RNA M5U methyltransferase family. TrmA subfamily.

It carries out the reaction uridine(54) in tRNA + S-adenosyl-L-methionine = 5-methyluridine(54) in tRNA + S-adenosyl-L-homocysteine + H(+). The catalysed reaction is uridine(341) in tmRNA + S-adenosyl-L-methionine = 5-methyluridine(341) in tmRNA + S-adenosyl-L-homocysteine + H(+). Functionally, dual-specificity methyltransferase that catalyzes the formation of 5-methyluridine at position 54 (m5U54) in all tRNAs, and that of position 341 (m5U341) in tmRNA (transfer-mRNA). The protein is tRNA/tmRNA (uracil-C(5))-methyltransferase of Pectobacterium atrosepticum (strain SCRI 1043 / ATCC BAA-672) (Erwinia carotovora subsp. atroseptica).